We begin with the raw amino-acid sequence, 1019 residues long: Sca1 complex protein phr (1019 aa).

Disordered regions lie at residues 89–118, 131–202, 265–287, and 512–546; these read IVINSSSSSSSSSSHHPHHQKTPSNSSSNF, AFNN…INNN, QQLNQNGGSNNGSTSNSTSNSAN, and STNNNNSGNNSNNNNGNSNGNSSNNNSNNNSTNNL. The segment covering 93-102 has biased composition (low complexity); the sequence is SSSSSSSSSS. A compositionally biased stretch (basic and acidic residues) spans 141 to 155; the sequence is NRKEKEKDKDKDHQD. Positions 158-188 form a coiled coil; that stretch reads NINNINNINNNINNNINNNNNNNNNNNNNNN. The segment covering 158–202 has biased composition (low complexity); sequence NINNINNINNNINNNINNNNNNNNNNNNNNNMHNPTSSSPSINNN. The PH domain occupies 735 to 836; sequence EIKKKGYLFK…WIKAIKFNCF (102 aa). A compositionally biased stretch (low complexity) spans 860–872; that stretch reads VAGSGSNNGNNNG. 3 disordered regions span residues 860-890, 904-951, and 977-1019; these read VAGSGSNNGNNNGHLKRSDTTQQLNNSGSFI, NLSI…QQQL, and SSYT…SKLK. The segment covering 879 to 890 has biased composition (polar residues); sequence TTQQLNNSGSFI. Over residues 977–986 the composition is skewed to low complexity; sequence SSYTDSMSGS. Residues 987 to 1019 show a composition bias toward polar residues; the sequence is PPDSNGQVFPQSPQLKKTLFQRTTSFSKGSKLK.

Component of the Sca1 complex composed of at least gefA, gefH, scaA, phr, and the protein phosphatase 2A subunits pppA and pho2B. Interacts directly with gefH.

Its subcellular location is the cell membrane. Functionally, component of the Sca1 complex, a regulator of cell motility, chemotaxis and signal relay. The Sca1 complex is recruited to the plasma membrane in a chemoattractant- and F-actin-dependent manner and is enriched at the leading edge of chemotaxing cells where it regulates F-actin dynamics and signal relay by controlling the activation of rasC and the downstream target of rapamycin complex 2 (TORC2)-Akt/protein kinase B (PKB) pathway. This chain is Sca1 complex protein phr, found in Dictyostelium discoideum (Social amoeba).